Reading from the N-terminus, the 263-residue chain is uncharacterized protein (263 aa).

Positions 183-263 are disordered; the sequence is APHDRPEGVP…PPSTNTKGAA (81 aa). 2 stretches are compositionally biased toward polar residues: residues 230–239 and 253–263; these read SRPTAPSRPS and TPPSTNTKGAA.

Its function is as follows. Probably does not play a direct role in plasmid integration or excision. This is an uncharacterized protein from Saccharopolyspora erythraea (Streptomyces erythraeus).